We begin with the raw amino-acid sequence, 512 residues long: Podocan-like protein 1 (512 aa).

The N-terminal stretch at 1–26 is a signal peptide; sequence MAESGLAMWPSLLLLLLLPGPPPVAG. Residues 37 to 74 form the LRRNT domain; sequence ESLQPLPRACPLRCSCPRVDTVDCDGLDLRVFPDNITR. Asparagine 71 is a glycosylation site (N-linked (GlcNAc...) asparagine). 17 LRR repeats span residues 75–96, 99–119, 125–146, 147–167, 170–193, 196–216, 217–238, 241–261, 267–288, 289–309, 312–332, 338–359, 360–380, 383–396, 409–430, 431–451, and 454–474; these read AAQH…ELSR, GLRT…PDEA, QLQH…LPRS, LRVA…TFGE, ALRS…AFRG, AIAT…SLPP, SLER…ALSR, QLRE…DATT, SLEY…LPRT, LAIL…RLHG, GLRY…PAGA, GLHT…LPRR, LRAL…DLVA, GLTE…RLAS, ALRS…LPTG, LRTL…PLAG, and QLRE…GPGT.

This sequence belongs to the small leucine-rich proteoglycan (SLRP) family. SLRP class V subfamily. N-glycosylated.

The protein localises to the secreted. It is found in the extracellular space. The protein resides in the extracellular matrix. The chain is Podocan-like protein 1 (PODNL1) from Homo sapiens (Human).